A 475-amino-acid chain; its full sequence is Sulfate adenylyltransferase subunit 1 (475 aa).

The tr-type G domain maps to 25–239; it reads KSLLRFLTCG…EVLETVEIQR (215 aa). Residues 34–41 are G1; it reads GSVDDGKS. 34–41 is a GTP binding site; it reads GSVDDGKS. Residues 92–96 are G2; sequence GITID. A G3 region spans residues 113-116; sequence DTPG. GTP contacts are provided by residues 113–117 and 168–171; these read DTPGH and NKMD. Positions 168–171 are G4; sequence NKMD. The segment at 206–208 is G5; the sequence is SAL.

The protein belongs to the TRAFAC class translation factor GTPase superfamily. Classic translation factor GTPase family. CysN/NodQ subfamily. Heterodimer composed of CysD, the smaller subunit, and CysN.

It carries out the reaction sulfate + ATP + H(+) = adenosine 5'-phosphosulfate + diphosphate. The protein operates within sulfur metabolism; hydrogen sulfide biosynthesis; sulfite from sulfate: step 1/3. With CysD forms the ATP sulfurylase (ATPS) that catalyzes the adenylation of sulfate producing adenosine 5'-phosphosulfate (APS) and diphosphate, the first enzymatic step in sulfur assimilation pathway. APS synthesis involves the formation of a high-energy phosphoric-sulfuric acid anhydride bond driven by GTP hydrolysis by CysN coupled to ATP hydrolysis by CysD. This is Sulfate adenylyltransferase subunit 1 from Shigella flexneri serotype 5b (strain 8401).